The primary structure comprises 142 residues: Large ribosomal subunit protein uL13 (142 aa).

The protein belongs to the universal ribosomal protein uL13 family. As to quaternary structure, part of the 50S ribosomal subunit.

Its function is as follows. This protein is one of the early assembly proteins of the 50S ribosomal subunit, although it is not seen to bind rRNA by itself. It is important during the early stages of 50S assembly. The polypeptide is Large ribosomal subunit protein uL13 (Geobacter sp. (strain M21)).